Consider the following 376-residue polypeptide: Dual-specificity RNA methyltransferase RlmN (376 aa).

Catalysis depends on glutamate 95, which acts as the Proton acceptor. Residues 101–339 form the Radical SAM core domain; it reads EKERATLCVS…CIVRRPRGDD (239 aa). A disulfide bond links cysteine 108 and cysteine 344. Residues cysteine 115, cysteine 119, and cysteine 122 each contribute to the [4Fe-4S] cluster site. S-adenosyl-L-methionine-binding positions include 169–170, serine 201, 223–225, and asparagine 301; these read GE and SLH. Cysteine 344 (S-methylcysteine intermediate) is an active-site residue.

Belongs to the radical SAM superfamily. RlmN family. Requires [4Fe-4S] cluster as cofactor.

The protein localises to the cytoplasm. The catalysed reaction is adenosine(2503) in 23S rRNA + 2 reduced [2Fe-2S]-[ferredoxin] + 2 S-adenosyl-L-methionine = 2-methyladenosine(2503) in 23S rRNA + 5'-deoxyadenosine + L-methionine + 2 oxidized [2Fe-2S]-[ferredoxin] + S-adenosyl-L-homocysteine. It catalyses the reaction adenosine(37) in tRNA + 2 reduced [2Fe-2S]-[ferredoxin] + 2 S-adenosyl-L-methionine = 2-methyladenosine(37) in tRNA + 5'-deoxyadenosine + L-methionine + 2 oxidized [2Fe-2S]-[ferredoxin] + S-adenosyl-L-homocysteine. Specifically methylates position 2 of adenine 2503 in 23S rRNA and position 2 of adenine 37 in tRNAs. m2A2503 modification seems to play a crucial role in the proofreading step occurring at the peptidyl transferase center and thus would serve to optimize ribosomal fidelity. This chain is Dual-specificity RNA methyltransferase RlmN, found in Pseudoalteromonas translucida (strain TAC 125).